The sequence spans 318 residues: Thymidylate synthase (318 aa).

DUMP is bound by residues arginine 25 and 180–181 (RR). Residue cysteine 200 is the Nucleophile of the active site. Residues 220-223 (RSGD), asparagine 231, and 261-263 (HIY) each bind dUMP. (6R)-5,10-methylene-5,6,7,8-tetrahydrofolate is bound at residue aspartate 223. Residue alanine 317 coordinates (6R)-5,10-methylene-5,6,7,8-tetrahydrofolate.

It belongs to the thymidylate synthase family. Bacterial-type ThyA subfamily. In terms of assembly, homodimer.

The protein resides in the cytoplasm. The enzyme catalyses dUMP + (6R)-5,10-methylene-5,6,7,8-tetrahydrofolate = 7,8-dihydrofolate + dTMP. Its pathway is pyrimidine metabolism; dTTP biosynthesis. In terms of biological role, catalyzes the reductive methylation of 2'-deoxyuridine-5'-monophosphate (dUMP) to 2'-deoxythymidine-5'-monophosphate (dTMP) while utilizing 5,10-methylenetetrahydrofolate (mTHF) as the methyl donor and reductant in the reaction, yielding dihydrofolate (DHF) as a by-product. This enzymatic reaction provides an intracellular de novo source of dTMP, an essential precursor for DNA biosynthesis. This is Thymidylate synthase from Bacillus cereus (strain ZK / E33L).